A 551-amino-acid polypeptide reads, in one-letter code: Arylsulfatase (551 aa).

The signal sequence occupies residues 1–20 (MKSAPFLFLLGLLGLVTAQT). Position 21 is a blocked amino end (Gln) (glutamine 21). The Ca(2+) site is built by aspartate 60, histidine 61, and cysteine 100. Catalysis depends on cysteine 100, which acts as the Nucleophile. Cysteine 100 is modified (3-oxoalanine (Cys)). Histidine 158 is an active-site residue. 3 N-linked (GlcNAc...) asparagine glycosylation sites follow: asparagine 164, asparagine 213, and asparagine 296. Ca(2+)-binding residues include aspartate 308 and histidine 309.

The protein belongs to the sulfatase family. The cofactor is Ca(2+). In terms of processing, the conversion to 3-oxoalanine (also known as C-formylglycine, FGly), of a serine or cysteine residue in prokaryotes and of a cysteine residue in eukaryotes, is critical for catalytic activity.

It localises to the cytoplasm. The protein resides in the secreted. Its subcellular location is the extracellular space. It is found in the extracellular matrix. The catalysed reaction is an aryl sulfate + H2O = a phenol + sulfate + H(+). Its function is as follows. May be a structural component of the extracellular matrices involved in cell movement during morphogenesis. The protein is Arylsulfatase of Hemicentrotus pulcherrimus (Sea urchin).